The sequence spans 394 residues: Elongation factor Tu 2 (394 aa).

Residues 9–204 (KPHCNIGTIG…SIDDYIPQPT (196 aa)) enclose the tr-type G domain. Residues 18 to 25 (GHVDHGKT) are G1. 18–25 (GHVDHGKT) is a GTP binding site. Position 25 (Thr25) interacts with Mg(2+). The tract at residues 61 to 65 (GITIQ) is G2. The interval 82–85 (DCPG) is G3. GTP contacts are provided by residues 82-86 (DCPGH) and 137-140 (NKID). The interval 137-140 (NKID) is G4. Positions 174-176 (SAL) are G5.

This sequence belongs to the TRAFAC class translation factor GTPase superfamily. Classic translation factor GTPase family. EF-Tu/EF-1A subfamily. As to quaternary structure, monomer.

It is found in the cytoplasm. The catalysed reaction is GTP + H2O = GDP + phosphate + H(+). GTP hydrolase that promotes the GTP-dependent binding of aminoacyl-tRNA to the A-site of ribosomes during protein biosynthesis. The protein is Elongation factor Tu 2 of Orientia tsutsugamushi (strain Boryong) (Rickettsia tsutsugamushi).